A 140-amino-acid polypeptide reads, in one-letter code: Large ribosomal subunit protein uL13 (140 aa).

This sequence belongs to the universal ribosomal protein uL13 family. As to quaternary structure, part of the 50S ribosomal subunit.

Its function is as follows. This protein is one of the early assembly proteins of the 50S ribosomal subunit, although it is not seen to bind rRNA by itself. It is important during the early stages of 50S assembly. In Methanosarcina barkeri (strain Fusaro / DSM 804), this protein is Large ribosomal subunit protein uL13.